We begin with the raw amino-acid sequence, 394 residues long: S-adenosylmethionine synthase 2 (394 aa).

E11 lines the Mg(2+) pocket. ATP is bound at residue H17. Position 45 (E45) interacts with K(+). Residues E58 and Q101 each coordinate L-methionine. ATP contacts are provided by residues 169–171 (DGK), 237–240 (SGRF), D248, 254–255 (RK), A271, K275, and K279. D248 lines the L-methionine pocket. K279 provides a ligand contact to L-methionine.

It belongs to the AdoMet synthase family. Homotetramer. Mn(2+) is required as a cofactor. Requires Mg(2+) as cofactor. Co(2+) serves as cofactor. The cofactor is K(+).

The protein localises to the cytoplasm. It carries out the reaction L-methionine + ATP + H2O = S-adenosyl-L-methionine + phosphate + diphosphate. The protein operates within amino-acid biosynthesis; S-adenosyl-L-methionine biosynthesis; S-adenosyl-L-methionine from L-methionine: step 1/1. Functionally, catalyzes the formation of S-adenosylmethionine from methionine and ATP. The reaction comprises two steps that are both catalyzed by the same enzyme: formation of S-adenosylmethionine (AdoMet) and triphosphate, and subsequent hydrolysis of the triphosphate. In Oryza sativa subsp. japonica (Rice), this protein is S-adenosylmethionine synthase 2 (SAM2).